Consider the following 449-residue polypeptide: Interferon-related developmental regulator 1 (449 aa).

Residues 1-10 (MPKNKKRNAP) show a composition bias toward basic residues. A disordered region spans residues 1 to 42 (MPKNKKRNAPHRGGGGGGGSGAATSAATAGGPHRTVQPFSDE). Over residues 12–21 (RGGGGGGGSG) the composition is skewed to gly residues. The span at 22-31 (AATSAATAGG) shows a compositional bias: low complexity.

The protein belongs to the IFRD family. Interacts with PSIP1/LEDGF.

Could play a role in regulating gene activity in the proliferative and/or differentiative pathways induced by NGF. May be an autocrine factor that attenuates or amplifies the initial ligand-induced signal. In Mus musculus (Mouse), this protein is Interferon-related developmental regulator 1 (Ifrd1).